The chain runs to 163 residues: uncharacterized protein (163 aa).

Expressed in keratinocytes.

This is an uncharacterized protein from Homo sapiens (Human).